A 469-amino-acid polypeptide reads, in one-letter code: Equisetin cluster transcription factor eqxR (469 aa).

A DNA-binding region (zn(2)-C6 fungal-type) is located at residues 13-47 (CDRCRSHKLKCTVAPENSRSGSNRCTRCIRAQVTC). Positions 58–84 (STNVKKADIKSGTNSQETTSMQASTIV) are disordered. Over residues 68–82 (SGTNSQETTSMQAST) the composition is skewed to polar residues.

It is found in the nucleus. Functionally, transcription factor that regulates the expression of the gene cluster that mediates the biosynthesis of Equisetin. The sequence is that of Equisetin cluster transcription factor eqxR from Fusarium heterosporum.